The primary structure comprises 184 residues: ATP-dependent protease subunit HslV (184 aa).

Thr12 is a catalytic residue. Residues Ala166, Cys169, and Thr172 each coordinate Na(+).

Belongs to the peptidase T1B family. HslV subfamily. In terms of assembly, a double ring-shaped homohexamer of HslV is capped on each side by a ring-shaped HslU homohexamer. The assembly of the HslU/HslV complex is dependent on binding of ATP.

It localises to the cytoplasm. The catalysed reaction is ATP-dependent cleavage of peptide bonds with broad specificity.. With respect to regulation, allosterically activated by HslU binding. Its function is as follows. Protease subunit of a proteasome-like degradation complex believed to be a general protein degrading machinery. The polypeptide is ATP-dependent protease subunit HslV (Brucella melitensis biotype 1 (strain ATCC 23456 / CCUG 17765 / NCTC 10094 / 16M)).